The following is a 317-amino-acid chain: Methionyl-tRNA formyltransferase (317 aa).

112 to 115 is a binding site for (6S)-5,6,7,8-tetrahydrofolate; sequence SLLP.

The protein belongs to the Fmt family.

It catalyses the reaction L-methionyl-tRNA(fMet) + (6R)-10-formyltetrahydrofolate = N-formyl-L-methionyl-tRNA(fMet) + (6S)-5,6,7,8-tetrahydrofolate + H(+). Its function is as follows. Attaches a formyl group to the free amino group of methionyl-tRNA(fMet). The formyl group appears to play a dual role in the initiator identity of N-formylmethionyl-tRNA by promoting its recognition by IF2 and preventing the misappropriation of this tRNA by the elongation apparatus. The polypeptide is Methionyl-tRNA formyltransferase (Mesorhizobium japonicum (strain LMG 29417 / CECT 9101 / MAFF 303099) (Mesorhizobium loti (strain MAFF 303099))).